Reading from the N-terminus, the 138-residue chain is UPF0201 protein TK1335 (138 aa).

Belongs to the UPF0201 family.

The chain is UPF0201 protein TK1335 from Thermococcus kodakarensis (strain ATCC BAA-918 / JCM 12380 / KOD1) (Pyrococcus kodakaraensis (strain KOD1)).